The sequence spans 606 residues: Isocitrate dehydrogenase kinase/phosphatase (606 aa).

ATP-binding positions include 354-360 and K375; that span reads APGFKGT. D414 is a catalytic residue.

The protein belongs to the AceK family.

The protein localises to the cytoplasm. The enzyme catalyses L-seryl-[isocitrate dehydrogenase] + ATP = O-phospho-L-seryl-[isocitrate dehydrogenase] + ADP + H(+). Functionally, bifunctional enzyme which can phosphorylate or dephosphorylate isocitrate dehydrogenase (IDH) on a specific serine residue. This is a regulatory mechanism which enables bacteria to bypass the Krebs cycle via the glyoxylate shunt in response to the source of carbon. When bacteria are grown on glucose, IDH is fully active and unphosphorylated, but when grown on acetate or ethanol, the activity of IDH declines drastically concomitant with its phosphorylation. This Rhodopseudomonas palustris (strain BisB5) protein is Isocitrate dehydrogenase kinase/phosphatase.